Here is a 2341-residue protein sequence, read N- to C-terminus: Pecanex-like protein 1 (2341 aa).

2 consecutive transmembrane segments (helical) span residues 28 to 50 and 57 to 74; these read ATFVNALHLYLWLFLLGLPFTLY and MIIVAVYCPVIAAVFIVL. Positions 98–163 are disordered; the sequence is FTDQRTKAEQ…SNQIGSGSSR (66 aa). A glycan (N-linked (GlcNAc...) asparagine) is linked at Asn109. Polar residues predominate over residues 143 to 163; it reads SSRNSYAGLDPSNQIGSGSSR. Residue Asn215 is glycosylated (N-linked (GlcNAc...) asparagine). 3 disordered regions span residues 270 to 294, 311 to 331, and 344 to 689; these read HSHSYRKDHRPRGVPRTSSSAVAFP, DPVSELESSKPLSGSKESLVE, and DLKI…TRAR. Over residues 272-282 the composition is skewed to basic residues; that stretch reads HSYRKDHRPRG. Polar residues-rich tracts occupy residues 320 to 331 and 347 to 356; these read KPLSGSKESLVE and INTSQPPTKS. Asn348 carries N-linked (GlcNAc...) asparagine glycosylation. Low complexity predominate over residues 370–388; that stretch reads SLRSLSTRSSGSTESYCSG. N-linked (GlcNAc...) asparagine glycosylation occurs at Asn394. Polar residues predominate over residues 394-404; that stretch reads NSTVSSYKSEQ. 3 stretches are compositionally biased toward basic and acidic residues: residues 430–455, 465–478, and 527–544; these read KKECCAGPEEKNSCASDKRTSSEKIA, HEAKDPTPSDEMHN, and SKVRKDVGGKQKEGDVRP. The segment covering 554–569 has biased composition (basic residues); that stretch reads ASAHKSGRRRTGKKRA. Low complexity predominate over residues 605–635; the sequence is QSDLSRASSVQSAHQFSSDSSSSTTSHSCQS. N-linked (GlcNAc...) asparagine glycosylation occurs at Asn702. The interval 756-834 is disordered; that stretch reads QVAFPEGEEQ…STAQVKVQSR (79 aa). Residues 814–832 are compositionally biased toward low complexity; sequence LSLQDGQQGQQSTAQVKVQ. N-linked (GlcNAc...) asparagine glycosylation is found at Asn852 and Asn863. Helical transmembrane passes span 1003–1025, 1032–1049, and 1067–1089; these read ILENVLAVILAILVAFLGSILLI, IWVFQFCLVIASCQYSLL, and IAYSRPVYFCICCGLIWLLDYGS. A glycan (N-linked (GlcNAc...) asparagine) is linked at Asn1091. The chain crosses the membrane as a helical span at residues 1110–1132; that stretch reads FISARDLVIVFTLCFPIVFFIGL. An N-linked (GlcNAc...) asparagine glycan is attached at Asn1155. Transmembrane regions (helical) follow at residues 1160–1182, 1194–1213, 1266–1288, and 1295–1312; these read LLAALYSFICSIVAVALLYGLCY, IPVLFSIFCGLLVAVSYHLS, LVVCIVIGVLYFAIHVSTVFTVL, and VLYTLVGFVGFVTHYVLP. N-linked (GlcNAc...) asparagine glycosylation is found at Asn1579, Asn1720, Asn1982, Asn2062, and Asn2072. Disordered regions lie at residues 2062–2120 and 2217–2237; these read NATT…SPAR and GQSSATDAQPGNTLSPANNSH. 3 stretches are compositionally biased toward polar residues: residues 2069–2078, 2096–2114, and 2217–2236; these read PHSNVTQGSI, YPPTLGTSHSSHSVQSGLV, and GQSSATDAQPGNTLSPANNS. 2 N-linked (GlcNAc...) asparagine glycosylation sites follow: Asn2234 and Asn2260.

Belongs to the pecanex family.

The protein localises to the membrane. The chain is Pecanex-like protein 1 from Homo sapiens (Human).